A 750-amino-acid polypeptide reads, in one-letter code: Retron Eco8 OLD nuclease (750 aa).

The interval 1–173 (MTIESIRVKN…IDLYDWNPIW (173 aa)) is ATPase domain N-terminus. 33-37 (NVGKS) contributes to the ATP binding site. The segment at 174-260 (KLISNLNSFN…TQSDGTNSNK (87 aa)) is dimerization domain. The interval 261-390 (FLETLLHLLI…FSDNEARLFF (130 aa)) is ATPase domain C-terminus. The toprim domain stretch occupies residues 391 to 704 (SEYIVFVEGA…SGWVTTFLNY (314 aa)). A divalent metal cation is bound by residues glutamate 398, glutamate 402, aspartate 450, aspartate 452, serine 623, and glutamate 641.

Belongs to the class 1 OLD nuclease family. As to quaternary structure, homodimer. It depends on a divalent metal cation as a cofactor.

Its function is as follows. Probable nuclease member of antiviral defense system retron Eco8, composed of an reverse transcriptase (RT), this nuclease and a non-coding RNA (ncRNA) encoded between them. Expression of retron Eco8 confers protection against bacteriophages T4, T6, T7 and SECphi4, SECphi6 and SECphi18. At multiplicity of infection (MOI) of 0.02 cultures slow growth when infected with SECphi4 but do not collapse, at MOI 2 cultures collapse. When the retron is cloned in another E.coli strain synthesizes msDNA (a branched RNA linked by a 2',5'-phosphodiester bond to a single-stranded DNA). The retron transcript serves as primer and template to the reaction, and codes for the RT. The polypeptide is Retron Eco8 OLD nuclease (Escherichia coli).